The sequence spans 295 residues: Tyrosine recombinase XerC (295 aa).

Positions 1 to 85 constitute a Core-binding (CB) domain; sequence MHILLQKYYN…ALRQFLNYLV (85 aa). One can recognise a Tyr recombinase domain in the interval 106-285; it reads YLPKNMDMEQ…DFQHLAQVYD (180 aa). Residues Arg-145, Lys-169, His-237, Arg-240, and His-263 contribute to the active site. Tyr-272 functions as the O-(3'-phospho-DNA)-tyrosine intermediate in the catalytic mechanism.

This sequence belongs to the 'phage' integrase family. XerC subfamily. In terms of assembly, forms a cyclic heterotetrameric complex composed of two molecules of XerC and two molecules of XerD.

The protein resides in the cytoplasm. Its function is as follows. Site-specific tyrosine recombinase, which acts by catalyzing the cutting and rejoining of the recombining DNA molecules. The XerC-XerD complex is essential to convert dimers of the bacterial chromosome into monomers to permit their segregation at cell division. It also contributes to the segregational stability of plasmids. The protein is Tyrosine recombinase XerC of Histophilus somni (strain 2336) (Haemophilus somnus).